Reading from the N-terminus, the 124-residue chain is Small ribosomal subunit protein uS12 (124 aa).

The tract at residues 1 to 30 (MPTIQQLVRKGRTPKVTKTKAPALKANPQQ) is disordered. Residues 9-18 (RKGRTPKVTK) are compositionally biased toward basic residues.

This sequence belongs to the universal ribosomal protein uS12 family. In terms of assembly, part of the 30S ribosomal subunit. Contacts proteins S8 and S17. May interact with IF1 in the 30S initiation complex.

Its function is as follows. With S4 and S5 plays an important role in translational accuracy. Interacts with and stabilizes bases of the 16S rRNA that are involved in tRNA selection in the A site and with the mRNA backbone. Located at the interface of the 30S and 50S subunits, it traverses the body of the 30S subunit contacting proteins on the other side and probably holding the rRNA structure together. The combined cluster of proteins S8, S12 and S17 appears to hold together the shoulder and platform of the 30S subunit. The sequence is that of Small ribosomal subunit protein uS12 from Leifsonia xyli subsp. xyli (strain CTCB07).